The sequence spans 184 residues: MKGSSLSLEIAEPYAQALMSVSQSNNLTERFGEDIRSLLDLLNNSPELREFLSNPVIREENKKEILQRIMGDQTHPYLRNFLMLLVDKRRIAFLEQVCEQYLALLRQLTNTVLAEVVSATELNDEQRQSVIDKVKTISGAQAVELKASINPDLIGGVIIKIGSQILDASIRGQLRRISLSLGGV.

The protein belongs to the ATPase delta chain family. In terms of assembly, F-type ATPases have 2 components, F(1) - the catalytic core - and F(0) - the membrane proton channel. F(1) has five subunits: alpha(3), beta(3), gamma(1), delta(1), epsilon(1). CF(0) has four main subunits: a(1), b(1), b'(1) and c(10-14). The alpha and beta chains form an alternating ring which encloses part of the gamma chain. F(1) is attached to F(0) by a central stalk formed by the gamma and epsilon chains, while a peripheral stalk is formed by the delta, b and b' chains.

The protein resides in the cellular thylakoid membrane. Its function is as follows. F(1)F(0) ATP synthase produces ATP from ADP in the presence of a proton or sodium gradient. F-type ATPases consist of two structural domains, F(1) containing the extramembraneous catalytic core and F(0) containing the membrane proton channel, linked together by a central stalk and a peripheral stalk. During catalysis, ATP synthesis in the catalytic domain of F(1) is coupled via a rotary mechanism of the central stalk subunits to proton translocation. This protein is part of the stalk that links CF(0) to CF(1). It either transmits conformational changes from CF(0) to CF(1) or is implicated in proton conduction. This Gloeothece citriformis (strain PCC 7424) (Cyanothece sp. (strain PCC 7424)) protein is ATP synthase subunit delta.